We begin with the raw amino-acid sequence, 117 residues long: Nascent polypeptide-associated complex protein (117 aa).

In terms of domain architecture, NAC-A/B spans 3–72 (PVNPRDLEKM…YTVEKPREET (70 aa)).

The protein belongs to the NAC-alpha family. As to quaternary structure, homodimer. Interacts with the ribosome. Binds ribosomal RNA.

Functionally, contacts the emerging nascent chain on the ribosome. This chain is Nascent polypeptide-associated complex protein, found in Aeropyrum pernix (strain ATCC 700893 / DSM 11879 / JCM 9820 / NBRC 100138 / K1).